The primary structure comprises 595 residues: Estrogen receptor (595 aa).

Residues 1–184 (MTMTLHTKAS…AMESAKETRY (184 aa)) form a modulating (transactivation AF-1); mediates interaction with MACROD1 region. A glycan (O-linked (GlcNAc) serine) is linked at Ser10. The required for interaction with NCOA1 stretch occupies residues 35–47 (LERPLGEVYVDGS). The interval 35 to 174 (LERPLGEVYV…LASTGDKGSM (140 aa)) is interaction with DDX5; self-association. Ser104 and Ser106 each carry phosphoserine; by CDK2. Ser118 is subject to Phosphoserine. Residues 149 to 173 (FYRPTSDNRRQSGRERLASTGDKGS) are disordered. Basic and acidic residues predominate over residues 154-165 (SDNRRQSGRERL). The residue at position 167 (Ser167) is a Phosphoserine; by CK2. NR C4-type zinc fingers lie at residues 185–205 (CAVCNDYASGYHYGVWSCEGC) and 221–245 (CPATNQCTIDKNRRKSCQACRLRKC). The segment at residues 185-250 (CAVCNDYASG…RLRKCYEVGM (66 aa)) is a DNA-binding region (nuclear receptor). The segment at 185-310 (CAVCNDYASG…TKKNSPALSL (126 aa)) is mediates interaction with DNTTIP2. The segment at 251-310 (MKGGIRKDRRGGRMLKHKRQRDEGEGRNEVGSSGDVRASNLWPSPLLIKHTKKNSPALSL) is hinge. Residues 257–269 (KDRRGGRMLKHKR) show a composition bias toward basic residues. The segment at 257 to 287 (KDRRGGRMLKHKRQRDEGEGRNEVGSSGDVR) is disordered. Residue Arg260 is modified to Asymmetric dimethylarginine; by PRMT1. The segment at 262-595 (GRMLKHKRQR…EEAGAFPTTV (334 aa)) is interaction with AKAP13. Positions 264–595 (MLKHKRQRDE…EEAGAFPTTV (332 aa)) are self-association. An NR LBD domain is found at 311-547 (TADQMVSALL…DLLLEMLDAH (237 aa)). The tract at residues 311–595 (TADQMVSALL…EEAGAFPTTV (285 aa)) is transactivation AF-2. Residues Glu353 and Arg394 each coordinate 17beta-estradiol. A lipid anchor (S-palmitoyl cysteine) is attached at Cys447. A 17beta-estradiol-binding site is contributed by His524. Tyr537 is subject to Phosphotyrosine; by Tyr-kinases. An O-linked (GlcNAc) threonine glycan is attached at Thr571.

The protein belongs to the nuclear hormone receptor family. NR3 subfamily. As to quaternary structure, binds DNA as a homodimer. Can form a heterodimer with ESR2. Interacts with coactivator NCOA5. Interacts with PELP1, the interaction is enhanced by 17-beta-estradiol; the interaction increases ESR1 transcriptional activity. Interacts with NCOA7; the interaction is ligand-inducible. Interacts with AKAP13, CUEDC2, HEXIM1, KDM5A, MAP1S, SMARD1, and UBE1C. Interacts with MUC1; the interaction is stimulated by 7 beta-estradiol (E2) and enhances ESR1-mediated transcription. Interacts with DNTTIP2, and UIMC1. Interacts with KMT2D/MLL2. Interacts with ATAD2; the interaction is enhanced by estradiol. Interacts with KIF18A and LDB1. Interacts with RLIM (via its C-terminus). Interacts with MACROD1. Interacts with SH2D4A and PLCG. Interacts with SH2D4A; the interaction blocks binding to PLCG and inhibits estrogen-induced cell proliferation. Interacts with DYNLL1. Interacts with CCDC62; the interaction requires estradiol and appears to enhance the transcription of target genes. Interacts with NR2C1; the interaction prevents homodimerization of ESR1 and suppresses its transcriptional activity and cell growth. Interacts with DNAAF4. Interacts with PRMT2. Interacts with RBFOX2. Interacts with EP300; the interaction is estrogen-dependent and enhanced by CITED1. Interacts with CITED1; the interaction is estrogen-dependent. Interacts with FAM120B, FOXL2, PHB2 and SLC30A9. Interacts with coactivators NCOA3 and NCOA6. Interacts with STK3/MST2 only in the presence of SAV1 and vice-versa. Binds to CSNK1D. Interacts with NCOA2; NCOA2 can interact with ESR1 AF-1 and AF-2 domains simultaneously and mediate their transcriptional synergy. Interacts with DDX5. Interacts with NCOA1; the interaction seems to require a self-association of N-terminal and C-terminal regions. Interacts with ZNF366, DDX17, NFKB1, RELA, SP1 and SP3. Interacts with NRIP1. Interacts with GPER1; the interaction occurs in an estrogen-dependent manner. Interacts with CLOCK and the interaction is stimulated by estrogen. Interacts with TRIP4 (ufmylated); estrogen dependent. Interacts with LMTK3; the interaction phosphorylates ESR1 (in vitro) and protects it against proteasomal degradation. Interacts with CCAR2 (via N-terminus) in a ligand-independent manner. Interacts with ZFHX3. Interacts with SFR1 in a ligand-dependent and -independent manner. Interacts with DCAF13, LATS1 and DCAF1; regulates ESR1 ubiquitination and ubiquitin-mediated proteasomal degradation. Interacts (via DNA-binding domain) with POU4F2 (C-terminus); this interaction increases the estrogen receptor ESR1 transcriptional activity in a DNA- and ligand 17-beta-estradiol-independent manner. Interacts with ESRRB isoform 1. Interacts with UBE3A and WBP2. Interacts with GTF2B. Interacts with RBM39. In the absence of hormonal ligand, interacts with TACC1. Interacts with PI3KR1 or PI3KR2 and PTK2/FAK1. Interacts with SRC. Interacts with BAG1; the interaction is promoted in the absence of estradiol (17-beta-estradiol/E2). Interacts with and ubiquitinated by STUB1; the interaction is promoted in the absence of estradiol (17-beta-estradiol/E2). Interacts with NEDD8. In terms of processing, ubiquitinated; regulated by LATS1 via DCAF1 it leads to ESR1 proteasomal degradation. Deubiquitinated by OTUB1. Ubiquitinated by STUB1/CHIP; in the CA1 hippocampal region following loss of endogenous circulating estradiol (17-beta-estradiol/E2). Ubiquitinated by UBR5, leading to its degradation: UBR5 specifically recognizes and binds ligand-bound ESR1 when it is not associated with coactivators (NCOAs). In presence of NCOAs, the UBR5-degron is not accessible, preventing its ubiquitination and degradation. Phosphorylated by cyclin A/CDK2 and CK1. Phosphorylation probably enhances transcriptional activity. Dephosphorylation at Ser-118 by PPP5C inhibits its transactivation activity. Phosphorylated by LMTK3 (in vitro). Post-translationally, palmitoylated at Cys-447 by ZDHHC7 and ZDHHC21. Palmitoylation is required for plasma membrane targeting and for rapid intracellular signaling via ERK and AKT kinases and cAMP generation, but not for signaling mediated by the nuclear hormone receptor. In terms of processing, dimethylated by PRMT1 at Arg-260. The methylation may favor cytoplasmic localization. Demethylated by JMJD6 at Arg-260.

Its subcellular location is the nucleus. The protein resides in the cytoplasm. The protein localises to the golgi apparatus. It is found in the cell membrane. Nuclear hormone receptor. The steroid hormones and their receptors are involved in the regulation of eukaryotic gene expression and affect cellular proliferation and differentiation in target tissues. Ligand-dependent nuclear transactivation involves either direct homodimer binding to a palindromic estrogen response element (ERE) sequence or association with other DNA-binding transcription factors, such as AP-1/c-Jun, c-Fos, ATF-2, Sp1 and Sp3, to mediate ERE-independent signaling. Ligand binding induces a conformational change allowing subsequent or combinatorial association with multiprotein coactivator complexes through LXXLL motifs of their respective components. Mutual transrepression occurs between the estrogen receptor (ER) and NF-kappa-B in a cell-type specific manner. Decreases NF-kappa-B DNA-binding activity and inhibits NF-kappa-B-mediated transcription from the IL6 promoter and displace RELA/p65 and associated coregulators from the promoter. Recruited to the NF-kappa-B response element of the CCL2 and IL8 promoters and can displace CREBBP. Present with NF-kappa-B components RELA/p65 and NFKB1/p50 on ERE sequences. Can also act synergistically with NF-kappa-B to activate transcription involving respective recruitment adjacent response elements; the function involves CREBBP. Can activate the transcriptional activity of TFF1. Also mediates membrane-initiated estrogen signaling involving various kinase cascades. Essential for MTA1-mediated transcriptional regulation of BRCA1 and BCAS3. Maintains neuronal survival in response to ischemic reperfusion injury when in the presence of circulating estradiol (17-beta-estradiol/E2). This is Estrogen receptor (ESR1) from Felis catus (Cat).